The sequence spans 502 residues: MAFKLSTKHLADIGAQTEKSIRIPSYDRNDVKEGIVHVGVGGFHRAHLAVYVDKLMQSHGVRDYAICGVGLQPADASMRDVLASQDHMYTVIERSAAGSTAHVVGSIRNFLFAPDDREAVIAKMAHPDTHIVSLTITESGYYYNENTHELQSEHPDIQHDLDPANAAKPKTTFGFLYAAMVRRREQGLKPFTVLSCDNMLKNGSITRNMLQSFAKLKDPSMADWIAQYGGFPNAMVDRITPRTSDPDIKELADKFKIDDAWPVVTEPFMQWVVEDKFADGRPPFDLVGVQVVKDVKDVEQFEKHKLRLLNASHSAMGYPGQLAGFKYVHEVMEHPLYRKFIWQMMQEEVKPLLPEIPGVDIDAYCNTLMERFSNPTIMDQLPRIALNSSGKMPQFVMPSIAEAIWVTGPFRRLVFVAACWFRYVLGVDDKGNKFEVDDPMREELQSKAQAGGTKPHEILSIKSLFGDDLRGDERFLKEVTQAMEDIARDGVMATMPKFVNDA.

35-46 (IVHVGVGGFHRA) is a binding site for NAD(+).

Belongs to the mannitol dehydrogenase family. As to quaternary structure, monomer.

It carries out the reaction D-mannitol + NAD(+) = D-fructose + NADH + H(+). Functionally, catalyzes the NAD(H)-dependent interconversion of D-fructose and D-mannitol in the mannitol metabolic pathway. This is Mannitol 2-dehydrogenase from Pyricularia oryzae (strain 70-15 / ATCC MYA-4617 / FGSC 8958) (Rice blast fungus).